The following is a 405-amino-acid chain: GTPase Obg (405 aa).

In terms of domain architecture, Obg spans 1–159 (MRFIDEAVVT…KVLKFELKVV (159 aa)). Positions 160-333 (ADVGLIGLPN…IKYHLMNEIE (174 aa)) constitute an OBG-type G domain. GTP is bound by residues 166-173 (GLPNAGKS), 191-195 (FTTLV), 213-216 (DIPG), 283-286 (NKID), and 314-316 (ATL). Mg(2+) is bound by residues Ser173 and Thr193. Positions 371–382 (YRAARKAAREGT) are enriched in basic and acidic residues. The interval 371–405 (YRAARKAAREGTDLSDDDFDGSDDDDDGVEVIYAP) is disordered. The span at 383–399 (DLSDDDFDGSDDDDDGV) shows a compositional bias: acidic residues.

It belongs to the TRAFAC class OBG-HflX-like GTPase superfamily. OBG GTPase family. As to quaternary structure, monomer. Mg(2+) serves as cofactor.

It is found in the cytoplasm. Its function is as follows. An essential GTPase which binds GTP, GDP and possibly (p)ppGpp with moderate affinity, with high nucleotide exchange rates and a fairly low GTP hydrolysis rate. Plays a role in control of the cell cycle, stress response, ribosome biogenesis and in those bacteria that undergo differentiation, in morphogenesis control. The protein is GTPase Obg of Psychrobacter arcticus (strain DSM 17307 / VKM B-2377 / 273-4).